The sequence spans 84 residues: DNA-directed RNA polymerase subunit Rpo5 (84 aa).

It belongs to the archaeal Rpo5/eukaryotic RPB5 RNA polymerase subunit family. In terms of assembly, part of the RNA polymerase complex.

It localises to the cytoplasm. The catalysed reaction is RNA(n) + a ribonucleoside 5'-triphosphate = RNA(n+1) + diphosphate. Functionally, DNA-dependent RNA polymerase (RNAP) catalyzes the transcription of DNA into RNA using the four ribonucleoside triphosphates as substrates. This Sulfurisphaera tokodaii (strain DSM 16993 / JCM 10545 / NBRC 100140 / 7) (Sulfolobus tokodaii) protein is DNA-directed RNA polymerase subunit Rpo5.